Here is a 301-residue protein sequence, read N- to C-terminus: Homoserine O-acetyltransferase (301 aa).

The active-site Acyl-thioester intermediate is the cysteine 142. Substrate contacts are provided by lysine 163 and serine 192. Residue histidine 235 is the Proton acceptor of the active site. Glutamate 237 is a catalytic residue. Residue arginine 249 participates in substrate binding.

It belongs to the MetA family.

It is found in the cytoplasm. The catalysed reaction is L-homoserine + acetyl-CoA = O-acetyl-L-homoserine + CoA. It participates in amino-acid biosynthesis; L-methionine biosynthesis via de novo pathway; O-acetyl-L-homoserine from L-homoserine: step 1/1. Its function is as follows. Transfers an acetyl group from acetyl-CoA to L-homoserine, forming acetyl-L-homoserine. The polypeptide is Homoserine O-acetyltransferase (Bacillus subtilis (strain 168)).